Here is a 140-residue protein sequence, read N- to C-terminus: 3-hydroxyacyl-[acyl-carrier-protein] dehydratase FabZ (140 aa).

Residue His-47 is part of the active site.

Belongs to the thioester dehydratase family. FabZ subfamily.

It localises to the cytoplasm. The enzyme catalyses a (3R)-hydroxyacyl-[ACP] = a (2E)-enoyl-[ACP] + H2O. Involved in unsaturated fatty acids biosynthesis. Catalyzes the dehydration of short chain beta-hydroxyacyl-ACPs and long chain saturated and unsaturated beta-hydroxyacyl-ACPs. This chain is 3-hydroxyacyl-[acyl-carrier-protein] dehydratase FabZ, found in Streptococcus equi subsp. equi (strain 4047).